Consider the following 568-residue polypeptide: Poly(A) polymerase (568 aa).

Residues 87 to 89 (YGS), 99 to 102 (SDID), 100 to 102 (DID), Asp-154, Lys-215, Tyr-224, and 233 to 234 (GV) contribute to the ATP site. Mg(2+)-binding residues include Asp-100, Asp-102, and Asp-154. Residues Ser-452 and Ser-550 each carry the phosphoserine modification. A disordered region spans residues 525-568 (NEKRPSKKSKRKNLDARHETVKRSKSDAASGDNINGTTAAVDVN). Basic and acidic residues predominate over residues 536–550 (KNLDARHETVKRSKS).

It belongs to the poly(A) polymerase family. As to quaternary structure, component of the cleavage and polyadenylation factor (CPF) complex, which is composed of PTI1, SYC1, SSU72, GLC7, MPE1, REF2, PFS2, PTA1, YSH1/BRR5, SWD2, CFT2/YDH1, YTH1, CFT1/YHH1, FIP1 and PAP1. Interacts with FIR1 and RRP6. Mg(2+) serves as cofactor. It depends on Mn(2+) as a cofactor.

The protein resides in the nucleus. It catalyses the reaction RNA(n) + ATP = RNA(n)-3'-adenine ribonucleotide + diphosphate. In terms of biological role, polymerase component of the cleavage and polyadenylation factor (CPF) complex, which plays a key role in polyadenylation-dependent pre-mRNA 3'-end formation and cooperates with cleavage factors including the CFIA complex and NAB4/CFIB. This Saccharomyces cerevisiae (strain ATCC 204508 / S288c) (Baker's yeast) protein is Poly(A) polymerase (PAP1).